The primary structure comprises 342 residues: Holliday junction branch migration complex subunit RuvB (342 aa).

A large ATPase domain (RuvB-L) region spans residues 1 to 184 (MEENFDIREQ…FGINLHLEYY (184 aa)). ATP is bound by residues leucine 23, arginine 24, glycine 65, lysine 68, threonine 69, threonine 70, 131 to 133 (EDY), arginine 174, tyrosine 184, and arginine 221. A Mg(2+)-binding site is contributed by threonine 69. The tract at residues 185 to 255 (DDDVLTSIIR…IARFALEALN (71 aa)) is small ATPAse domain (RuvB-S). A head domain (RuvB-H) region spans residues 258–342 (RYGLDEIDNK…YNSQKTLFDD (85 aa)). 2 residues coordinate DNA: arginine 313 and arginine 318.

This sequence belongs to the RuvB family. As to quaternary structure, homohexamer. Forms an RuvA(8)-RuvB(12)-Holliday junction (HJ) complex. HJ DNA is sandwiched between 2 RuvA tetramers; dsDNA enters through RuvA and exits via RuvB. An RuvB hexamer assembles on each DNA strand where it exits the tetramer. Each RuvB hexamer is contacted by two RuvA subunits (via domain III) on 2 adjacent RuvB subunits; this complex drives branch migration. In the full resolvosome a probable DNA-RuvA(4)-RuvB(12)-RuvC(2) complex forms which resolves the HJ.

It localises to the cytoplasm. The enzyme catalyses ATP + H2O = ADP + phosphate + H(+). In terms of biological role, the RuvA-RuvB-RuvC complex processes Holliday junction (HJ) DNA during genetic recombination and DNA repair, while the RuvA-RuvB complex plays an important role in the rescue of blocked DNA replication forks via replication fork reversal (RFR). RuvA specifically binds to HJ cruciform DNA, conferring on it an open structure. The RuvB hexamer acts as an ATP-dependent pump, pulling dsDNA into and through the RuvAB complex. RuvB forms 2 homohexamers on either side of HJ DNA bound by 1 or 2 RuvA tetramers; 4 subunits per hexamer contact DNA at a time. Coordinated motions by a converter formed by DNA-disengaged RuvB subunits stimulates ATP hydrolysis and nucleotide exchange. Immobilization of the converter enables RuvB to convert the ATP-contained energy into a lever motion, pulling 2 nucleotides of DNA out of the RuvA tetramer per ATP hydrolyzed, thus driving DNA branch migration. The RuvB motors rotate together with the DNA substrate, which together with the progressing nucleotide cycle form the mechanistic basis for DNA recombination by continuous HJ branch migration. Branch migration allows RuvC to scan DNA until it finds its consensus sequence, where it cleaves and resolves cruciform DNA. This chain is Holliday junction branch migration complex subunit RuvB, found in Phocaeicola vulgatus (strain ATCC 8482 / DSM 1447 / JCM 5826 / CCUG 4940 / NBRC 14291 / NCTC 11154) (Bacteroides vulgatus).